The sequence spans 314 residues: CD-NTase-associated protein 12 (314 aa).

The 125-residue stretch at 5–129 (RIFIGSSSEE…VKGISLARFK (125 aa)) folds into the TIR domain. Residues 160 to 314 (SSTLAAVYYE…DLIKIVDEDN (155 aa)) are STING domain. Residues Phe171, Pro234, and Asp252 each coordinate 3',3'-c-di-GMP.

The protein in the C-terminal section; belongs to the bacterial STING family. Homodimer. Forms homodimers; in the presence of c-di-GMP forms filaments with an ordered array of parallel-stacked subunits.

The catalysed reaction is NAD(+) + H2O = ADP-D-ribose + nicotinamide + H(+). NAD(+) hydrolase activity is strongly stimulated by c-di-GMP, weakly by 3'3'-cGAMP, very weakly by c-di-AMP but not at all by 2'3'-cGAMP. Self-association of TIR domains is required for NADase activity. Functionally, effector protein of a CBASS antiviral system with NAD(+) hydrolase activity. CBASS (cyclic oligonucleotide-based antiphage signaling system) provides immunity against bacteriophage. The CD-NTase protein synthesizes cyclic nucleotides in response to infection; these serve as specific second messenger signals. The signals activate a diverse range of effectors, leading to bacterial cell death and thus abortive phage infection. A type I-(GG) CBASS system. Binds c-di-GMP (synthesized by the cognate CdnE encoded upstream in the same operon), and about 10-fold less well 3'3'-cGAMP, but not c-di-AMP, 2'-3'-cGAMP or cUMP-AMP (tested without the N-terminal TIR domain). Upon activation by c-di-GMP forms filaments which hydrolyze NAD(+); filament formation is required for enzyme activation. This chain is CD-NTase-associated protein 12, found in Capnocytophaga granulosa (strain ATCC 51502 / DSM 11449 / JCM 8566 / LMG 16022 / NCTC 12948 / B0611).